A 579-amino-acid chain; its full sequence is Suppressor of cytokine signaling 7 (579 aa).

Disordered stretches follow at residues 1-25 (MVFR…GPSE), 89-270 (PPPP…RTQS), and 295-315 (QRGL…RSLS). Composition is skewed to pro residues over residues 89-99 (PPPPQPPPPAA), 155-165 (PPGPELPPVPF), and 185-196 (QPPPPPPPPGPL). The segment at 124-492 (AESLETNSCS…GKFLYFLRSR (369 aa)) is mediates interaction with SORBS3. The span at 206–217 (GSFKIRLSRLFR) shows a compositional bias: basic residues. The span at 301-311 (PHPPTPPPPPR) shows a compositional bias: pro residues. The SH2 domain occupies 398-507 (WYWGPMNWED…PTPVQLLYPV (110 aa)). An SOCS box domain is found at 502–552 (QLLYPVSRFSNVKSLQHLCRFRIRQLVRIDHIPDLPLPKPLISYIRKFYYY).

Substrate-recognition component of the ECS(SOCS7) complex, composed of SOCS7, CUL5, ELOB, ELOC and RNF7/RBX2. Interacts, via the third proline-rich region, with the second SH3 domain of the adapter protein NCK1. Also interacts with GRB2, INSR, PLCG1, SORBS3/vinexin, and phosphorylated STAT3 and STAT5. Interacts with SEPT6. Interacts with phosphorylated IRS4 and PIK3R1. Widely expressed with higher expression in brain and testis where it is expressed by spermatocytes and early spermatids. Also significantly expressed in spleen, skeletal muscle and kidney.

The protein localises to the cytoplasm. It localises to the nucleus. It is found in the cell membrane. It functions in the pathway protein modification; protein ubiquitination. Functionally, substrate-recognition component of a cullin-5-RING E3 ubiquitin-protein ligase complex (ECS complex, also named CRL5 complex), which mediates the ubiquitination and subsequent proteasomal degradation of target proteins, such as DAB1 and IRS1. Specifically recognizes and binds phosphorylated proteins via its SH2 domain, promoting their ubiquitination. The ECS(SOCS7) complex acts as a key regulator of reelin signaling by mediating ubiquitination and degradation of phosphorylated DAB1 in the cortical plate of the developing cerebral cortex, thereby regulating neuron positioning during cortex development. Functions in insulin signaling and glucose homeostasis through IRS1 ubiquitination and subsequent proteasomal degradation. Also inhibits prolactin, growth hormone and leptin signaling by preventing STAT3 and STAT5 activation, sequestering them in the cytoplasm and reducing their binding to DNA. This is Suppressor of cytokine signaling 7 from Mus musculus (Mouse).